The chain runs to 371 residues: MSTQKPLIALAAGGTGGHVFPAEALASVLLDRGYRLALITDKRGAAYGGTLGKLETFRISAGGIAGRGKLSALRSALELGLGLIQARSILGRIRPAAVIGFGGYASVPGMGAAALAGIPTAIHEQNAVLGRANRLLAGHVRRIATSFAEVSHVEPKLAPKLVHTGMPVRAAILASRDASYAGITAEGPIELLVLGGSQGARILSEVIPAALARLPEALRTRIRIAQQCRPEDLEGVRRAYDGTGIDATLDSFFADVPERLARAHLVIARAGASTVAELTTLGRPAILVPYPFAVDDHQTANAHAAEDCGGAWLMQQDSFTADSLAARLDSLFTHPEALVRTAVCARNVGRPDAAEALADLVVGLIPNESGA.

Residues 15–17, asparagine 126, arginine 169, serine 197, and glutamine 298 contribute to the UDP-N-acetyl-alpha-D-glucosamine site; that span reads TGG.

This sequence belongs to the glycosyltransferase 28 family. MurG subfamily.

The protein localises to the cell inner membrane. It catalyses the reaction di-trans,octa-cis-undecaprenyl diphospho-N-acetyl-alpha-D-muramoyl-L-alanyl-D-glutamyl-meso-2,6-diaminopimeloyl-D-alanyl-D-alanine + UDP-N-acetyl-alpha-D-glucosamine = di-trans,octa-cis-undecaprenyl diphospho-[N-acetyl-alpha-D-glucosaminyl-(1-&gt;4)]-N-acetyl-alpha-D-muramoyl-L-alanyl-D-glutamyl-meso-2,6-diaminopimeloyl-D-alanyl-D-alanine + UDP + H(+). The protein operates within cell wall biogenesis; peptidoglycan biosynthesis. Cell wall formation. Catalyzes the transfer of a GlcNAc subunit on undecaprenyl-pyrophosphoryl-MurNAc-pentapeptide (lipid intermediate I) to form undecaprenyl-pyrophosphoryl-MurNAc-(pentapeptide)GlcNAc (lipid intermediate II). The protein is UDP-N-acetylglucosamine--N-acetylmuramyl-(pentapeptide) pyrophosphoryl-undecaprenol N-acetylglucosamine transferase of Paramagnetospirillum magneticum (strain ATCC 700264 / AMB-1) (Magnetospirillum magneticum).